A 333-amino-acid polypeptide reads, in one-letter code: Nucleoid-associated protein (333 aa).

Belongs to the YejK family.

It localises to the cytoplasm. The protein localises to the nucleoid. The sequence is that of Nucleoid-associated protein from Metapseudomonas resinovorans (Pseudomonas resinovorans).